A 391-amino-acid polypeptide reads, in one-letter code: MTEEFNESMINDIKEGDKVTGEVQQVEDKQVVVHINGGKFNGIIPISQLSTHHIDSPSEVVKEGDEVEAYVTKVEFDEENETGAYILSRRQLETEKSYSYLQEKLDNNEIIEAKVTEVVKGGLVVDVGQRGFVPASLISTDFIEDFSVFDGQTIRIKVEELDPENNRVILSRKAVEQEENDAKKDQLLQSLNEGDVIDGKVARLTQFGAFIDIGGVDGLVHVSELSHEHVQTPEEVVSIGQDVKVKIKSIDRDTERISLSIKDTLPTPFENIKGQFHENDDIEGVVVRLANFGAFVEIAPGVQGLVHISEIAHKHIGTPGEVLEPGQQVNVKILGIDEENERVSLSIKATLPNEDVVESDPSTTKAYLESEEEDNPTIGDMIGDKLKNLKL.

S1 motif domains lie at 16-90 (GDKV…LSRR), 108-173 (NEII…LSRK), 194-262 (GDVI…LSIK), and 279-348 (NDDI…LSIK). A disordered region spans residues 356 to 381 (VVESDPSTTKAYLESEEEDNPTIGDM).

It belongs to the bacterial ribosomal protein bS1 family.

In terms of biological role, binds mRNA; thus facilitating recognition of the initiation point. It is needed to translate mRNA with a short Shine-Dalgarno (SD) purine-rich sequence. The protein is Small ribosomal subunit protein bS1 (rpsA) of Staphylococcus aureus (strain MRSA252).